The primary structure comprises 28 residues: Cyclotide vodo I3 (28 aa).

3 cysteine pairs are disulfide-bonded: Cys-4-Cys-18, Cys-8-Cys-20, and Cys-13-Cys-25.

Post-translationally, this is a cyclic peptide. Contains 3 disulfide bonds.

Probably participates in a plant defense mechanism. The sequence is that of Cyclotide vodo I3 from Viola odorata (Sweet violet).